Consider the following 761-residue polypeptide: Mitochondrial intermediate peptidase 1 (761 aa).

H530 provides a ligand contact to Zn(2+). The active site involves E531. Zn(2+) contacts are provided by H534 and H537.

This sequence belongs to the peptidase M3 family. The cofactor is Zn(2+).

The protein localises to the mitochondrion matrix. It carries out the reaction Release of an N-terminal octapeptide as second stage of processing of some proteins imported into the mitochondrion.. In terms of biological role, cleaves proteins, imported into the mitochondrion, to their mature size. While most mitochondrial precursor proteins are processed to the mature form in one step by mitochondrial processing peptidase (MPP), the sequential cleavage by MIP of an octapeptide after initial processing by MPP is a required step for a subgroup of nuclear-encoded precursor proteins destined for the matrix or the inner membrane. The protein is Mitochondrial intermediate peptidase 1 (OCT1) of Cryptococcus neoformans var. neoformans serotype D (strain B-3501A) (Filobasidiella neoformans).